Here is a 193-residue protein sequence, read N- to C-terminus: FMN-dependent NADH:quinone oxidoreductase (193 aa).

FMN is bound by residues Ser-9, 15 to 17 (SSS), and 137 to 140 (TSGG).

This sequence belongs to the azoreductase type 1 family. As to quaternary structure, homodimer. FMN is required as a cofactor.

The catalysed reaction is 2 a quinone + NADH + H(+) = 2 a 1,4-benzosemiquinone + NAD(+). The enzyme catalyses N,N-dimethyl-1,4-phenylenediamine + anthranilate + 2 NAD(+) = 2-(4-dimethylaminophenyl)diazenylbenzoate + 2 NADH + 2 H(+). Functionally, quinone reductase that provides resistance to thiol-specific stress caused by electrophilic quinones. Also exhibits azoreductase activity. Catalyzes the reductive cleavage of the azo bond in aromatic azo compounds to the corresponding amines. The sequence is that of FMN-dependent NADH:quinone oxidoreductase from Pelagibacter ubique (strain HTCC1062).